Here is a 442-residue protein sequence, read N- to C-terminus: tRNA-2-methylthio-N(6)-dimethylallyladenosine synthase (442 aa).

In terms of domain architecture, MTTase N-terminal spans 6–122 (RKFYIHTFGC…LPALIAEAGD (117 aa)). Residues Cys-15, Cys-51, Cys-85, Cys-157, Cys-161, and Cys-164 each coordinate [4Fe-4S] cluster. The Radical SAM core domain maps to 143-373 (RTQSLNAFVP…IDLQNGISAE (231 aa)). The TRAM domain maps to 376–439 (GLAPGSVVEV…SATLFGQSAE (64 aa)).

Belongs to the methylthiotransferase family. MiaB subfamily. Monomer. [4Fe-4S] cluster is required as a cofactor.

The protein resides in the cytoplasm. The catalysed reaction is N(6)-dimethylallyladenosine(37) in tRNA + (sulfur carrier)-SH + AH2 + 2 S-adenosyl-L-methionine = 2-methylsulfanyl-N(6)-dimethylallyladenosine(37) in tRNA + (sulfur carrier)-H + 5'-deoxyadenosine + L-methionine + A + S-adenosyl-L-homocysteine + 2 H(+). In terms of biological role, catalyzes the methylthiolation of N6-(dimethylallyl)adenosine (i(6)A), leading to the formation of 2-methylthio-N6-(dimethylallyl)adenosine (ms(2)i(6)A) at position 37 in tRNAs that read codons beginning with uridine. The polypeptide is tRNA-2-methylthio-N(6)-dimethylallyladenosine synthase (Chlorobium phaeobacteroides (strain DSM 266 / SMG 266 / 2430)).